Here is a 791-residue protein sequence, read N- to C-terminus: Probable phosphoketolase (791 aa).

Belongs to the XFP family. Requires thiamine diphosphate as cofactor.

The sequence is that of Probable phosphoketolase from Pseudomonas putida (strain ATCC 700007 / DSM 6899 / JCM 31910 / BCRC 17059 / LMG 24140 / F1).